The following is a 410-amino-acid chain: Peptidase T (410 aa).

His-78 contacts Zn(2+). The active site involves Asp-80. Residue Asp-140 participates in Zn(2+) binding. The active-site Proton acceptor is the Glu-174. Residues Glu-175, Asp-197, and His-379 each contribute to the Zn(2+) site.

The protein belongs to the peptidase M20B family. Zn(2+) serves as cofactor.

It is found in the cytoplasm. The catalysed reaction is Release of the N-terminal residue from a tripeptide.. Functionally, cleaves the N-terminal amino acid of tripeptides. In Vibrio atlanticus (strain LGP32) (Vibrio splendidus (strain Mel32)), this protein is Peptidase T.